The primary structure comprises 88 residues: UPF0297 protein LACR_0137 (88 aa).

This sequence belongs to the UPF0297 family.

This chain is UPF0297 protein LACR_0137, found in Lactococcus lactis subsp. cremoris (strain SK11).